The following is a 511-amino-acid chain: Sulfate adenylyltransferase (511 aa).

The tract at residues 1–167 is N-terminal; that stretch reads MPAPHGGILQ…LEAIQLPQHY (167 aa). Positions 168–393 are catalytic; it reads DYPGLRKTPA…LRESNPPRPK (226 aa). Gln-195 provides a ligand contact to sulfate. Residues 195-198 and 289-292 each bind ATP; these read QTRN and GRDH. Catalysis depends on residues Thr-196, Arg-197, and Asn-198. Arg-197 is a sulfate binding site. Ala-293 contacts sulfate. ATP is bound at residue Val-331. The required for oligomerization; adenylyl-sulfate kinase-like stretch occupies residues 394–511; it reads QGFSIVLGNS…FLEDNGFFVF (118 aa).

It belongs to the sulfate adenylyltransferase family. As to quaternary structure, homohexamer. Dimer of trimers.

It localises to the cytoplasm. The catalysed reaction is sulfate + ATP + H(+) = adenosine 5'-phosphosulfate + diphosphate. Its pathway is sulfur metabolism; hydrogen sulfide biosynthesis; sulfite from sulfate: step 1/3. In terms of biological role, catalyzes the first intracellular reaction of sulfate assimilation, forming adenosine-5'-phosphosulfate (APS) from inorganic sulfate and ATP. Plays an important role in sulfate activation as a component of the biosynthesis pathway of sulfur-containing amino acids. In Saccharomyces cerevisiae (strain ATCC 204508 / S288c) (Baker's yeast), this protein is Sulfate adenylyltransferase.